We begin with the raw amino-acid sequence, 390 residues long: MKFVDEAVIKVQAGDGGNGVVSFWREKFVTNGGPDGGDGGDGGDVYMVADENLNTLIDYRFQRFYEAERGKNGGGGNCTGKSGKDKELRVPVGTRAVDIHTNEIIGEVAEHGKKVMIAKGGWHGLGNARFKSSVNRSPRQKTLGTKGELRDIRLELLLLADVGMLGMPNAGKSTFIRAVSAAKPKVADYPFTTLVPSLGVVSVLPEKSFVVADIPGLIEGAAEGAGLGIRFLKHLERCRVLLHMIDIMPADQSDPAHNALTIIDELEQYSEKLAKKPRWLVFNKVDLMSEEEADEIIQNIIDALAWEGDYFKISAANRQGTKELCMKLAEFMDTLPREAEEKTEAEKVDFTWDYNHKDGLAGREVITEDDDDWDDWDDEEDDGHVIYVRD.

In terms of domain architecture, Obg spans 1–159 (MKFVDEAVIK…RDIRLELLLL (159 aa)). Residues 160–333 (ADVGMLGMPN…LCMKLAEFMD (174 aa)) enclose the OBG-type G domain. Residues 166–173 (GMPNAGKS), 191–195 (FTTLV), 213–216 (DIPG), 283–286 (NKVD), and 314–316 (SAA) each bind GTP. Mg(2+) contacts are provided by Ser173 and Thr193.

Belongs to the TRAFAC class OBG-HflX-like GTPase superfamily. OBG GTPase family. As to quaternary structure, monomer. Interacts with SpoT (AC Q9KNM2) in a yeast 2-hybrid assay. Mg(2+) is required as a cofactor.

Its subcellular location is the cytoplasm. In terms of biological role, depletion experiments lead to gene down regulation and a dramatic increase in ppGpp levels, like those seen in the stringent response. There is no change in cell morphology in depletion experiments, but cells are very sensitive to the DNA-damaging agent hydroxyurea and are very elongated. Overexpression reduces growth and leads to elongated cells. Overexpression of proteins with C-terminal deletions of 29 or 62 amino acids showed fewer elongated cells. An essential GTPase which binds GTP, GDP and possibly (p)ppGpp with moderate affinity, with high nucleotide exchange rates and a fairly low GTP hydrolysis rate. It may play a role in control of the cell cycle, stress response, ribosome biogenesis and in those bacteria that undergo differentiation, in morphogenesis control. GTPase activity is stimulated by 50S ribosomal subunits. In Vibrio cholerae serotype O1 (strain ATCC 39315 / El Tor Inaba N16961), this protein is GTPase Obg/CgtA.